Here is a 583-residue protein sequence, read N- to C-terminus: L-galactono-1,4-lactone dehydrogenase 1, mitochondrial (583 aa).

The transit peptide at 1-36 directs the protein to the mitochondrion; that stretch reads MRRLLLAGILRRASSSPSSHHHLHLVRALSASSPLP. Positions 37–78 are cleaved as a propeptide — removed in mature form; the sequence is ASDADLRKYAGYALLLLGCGAATYYSFPLPPDALHKKAVPFK. A helical membrane pass occupies residues 45–61; the sequence is YAGYALLLLGCGAATYY. The 172-residue stretch at 95 to 266 folds into the FAD-binding PCMH-type domain; the sequence is THEVHTRVLL…AEVTLQCVER (172 aa).

The cofactor is FAD.

The protein resides in the mitochondrion membrane. It carries out the reaction L-galactono-1,4-lactone + 4 Fe(III)-[cytochrome c] = L-dehydroascorbate + 4 Fe(II)-[cytochrome c] + 5 H(+). The protein operates within cofactor biosynthesis; L-ascorbate biosynthesis. Involved in the biosynthesis of ascorbic acid. The protein is L-galactono-1,4-lactone dehydrogenase 1, mitochondrial (GLDH1) of Oryza sativa subsp. japonica (Rice).